The sequence spans 319 residues: Epoxyqueuosine reductase (319 aa).

Aspartate 146 functions as the Proton donor in the catalytic mechanism. The 4Fe-4S ferredoxin-type domain occupies 188–220 (ASLPADQPARSLCGHCQRCLPACPTAAITEPFV). [4Fe-4S] cluster-binding residues include cysteine 200, cysteine 203, cysteine 206, cysteine 210, cysteine 226, cysteine 250, cysteine 253, and cysteine 257.

This sequence belongs to the QueG family. In terms of assembly, monomer. Requires cob(II)alamin as cofactor. The cofactor is [4Fe-4S] cluster.

It is found in the cytoplasm. The catalysed reaction is epoxyqueuosine(34) in tRNA + AH2 = queuosine(34) in tRNA + A + H2O. It participates in tRNA modification; tRNA-queuosine biosynthesis. Catalyzes the conversion of epoxyqueuosine (oQ) to queuosine (Q), which is a hypermodified base found in the wobble positions of tRNA(Asp), tRNA(Asn), tRNA(His) and tRNA(Tyr). This chain is Epoxyqueuosine reductase, found in Synechococcus sp. (strain RCC307).